A 305-amino-acid chain; its full sequence is J domain-containing protein 1 (305 aa).

Residues 91-163 (TPYEVLGLVK…SRRRMYDMYA (73 aa)) form the J domain. Residues 212–232 (WGMVVWALCMLAGFQVMAFLI) form a helical membrane-spanning segment.

The protein belongs to the DnaJ family.

The protein localises to the mitochondrion membrane. Functionally, probable chaperone. This Eremothecium gossypii (strain ATCC 10895 / CBS 109.51 / FGSC 9923 / NRRL Y-1056) (Yeast) protein is J domain-containing protein 1 (JID1).